Reading from the N-terminus, the 462-residue chain is CCA-adding enzyme (462 aa).

The ATP site is built by Ser-54 and Arg-57. Residues Ser-54 and Arg-57 each coordinate CTP. Residues Asp-66, Asp-68, and Asp-117 each contribute to the Mg(2+) site. The ATP site is built by His-140, Lys-160, and Tyr-169. Residues His-140, Lys-160, and Tyr-169 each contribute to the CTP site.

The protein belongs to the tRNA nucleotidyltransferase/poly(A) polymerase family. Archaeal CCA-adding enzyme subfamily. As to quaternary structure, homodimer. It depends on Mg(2+) as a cofactor.

The catalysed reaction is a tRNA precursor + 2 CTP + ATP = a tRNA with a 3' CCA end + 3 diphosphate. It catalyses the reaction a tRNA with a 3' CCA end + 2 CTP + ATP = a tRNA with a 3' CCACCA end + 3 diphosphate. Catalyzes the addition and repair of the essential 3'-terminal CCA sequence in tRNAs without using a nucleic acid template. Adds these three nucleotides in the order of C, C, and A to the tRNA nucleotide-73, using CTP and ATP as substrates and producing inorganic pyrophosphate. tRNA 3'-terminal CCA addition is required both for tRNA processing and repair. Also involved in tRNA surveillance by mediating tandem CCA addition to generate a CCACCA at the 3' terminus of unstable tRNAs. While stable tRNAs receive only 3'-terminal CCA, unstable tRNAs are marked with CCACCA and rapidly degraded. This is CCA-adding enzyme from Halorubrum lacusprofundi (strain ATCC 49239 / DSM 5036 / JCM 8891 / ACAM 34).